The primary structure comprises 665 residues: Fructose-1,6-bisphosphatase class 3 (665 aa).

This sequence belongs to the FBPase class 3 family. Requires Mn(2+) as cofactor.

The enzyme catalyses beta-D-fructose 1,6-bisphosphate + H2O = beta-D-fructose 6-phosphate + phosphate. It functions in the pathway carbohydrate biosynthesis; gluconeogenesis. The chain is Fructose-1,6-bisphosphatase class 3 from Clostridium acetobutylicum (strain ATCC 824 / DSM 792 / JCM 1419 / IAM 19013 / LMG 5710 / NBRC 13948 / NRRL B-527 / VKM B-1787 / 2291 / W).